Consider the following 66-residue polypeptide: Large ribosomal subunit protein bL33c (66 aa).

This sequence belongs to the bacterial ribosomal protein bL33 family.

It localises to the plastid. Its subcellular location is the chloroplast. The polypeptide is Large ribosomal subunit protein bL33c (Agrostis stolonifera (Creeping bentgrass)).